The chain runs to 384 residues: Prostaglandin E synthase 2 (384 aa).

The Lumenal portion of the chain corresponds to 1–56; sequence MAQAARLSWVLVSSRCALTEGLLTRPWQPLSAQSRAGFTRVAAGSRGAAVRKGSPR. The helical transmembrane segment at 57 to 73 threads the bilayer; that stretch reads LLGAAALALGGALGLYH. Residues 74–384 are Cytoplasmic-facing; that stretch reads TVRWHQRSQD…VHHVNPSCKD (311 aa). In terms of domain architecture, Glutaredoxin spans 89–192; the sequence is SAAQLPLSNS…EVITYYPPMK (104 aa). Glutathione is bound by residues V147 and 163-164; that span reads DS. One can recognise a GST C-terminal domain in the interval 262-376; the sequence is YIVREGKFGA…RAIEEAPSVH (115 aa).

This sequence belongs to the GST superfamily. In terms of assembly, homodimer. Interacts with EXOSC10. May interact with CEBPB. Synthesized as a Golgi membrane-associated protein, and the proteolytic removal of the N-terminal hydrophobic domain leads to the formation of a mature cytosolic enzyme. Widely expressed. Expressed in brain, heart, liver, colon and lung.

It localises to the golgi apparatus membrane. Its subcellular location is the nucleus. The protein localises to the cytoplasm. The catalysed reaction is prostaglandin H2 = prostaglandin E2. It catalyses the reaction prostaglandin H2 = (12S)-hydroxy-(5Z,8E,10E)-heptadecatrienoate + malonaldehyde. Its pathway is lipid metabolism; prostaglandin biosynthesis. Isomerase activity is increased by sulfhydril compounds. Dithiothreitol (DTT) is most effective, followed by glutathione (GSH) and 2-mercaptoethanol. Functionally, isomerase that catalyzes the conversion of PGH2 into the more stable prostaglandin E2 (PGE2) (in vitro). The biological function and the GSH-dependent property of PTGES2 is still under debate. In vivo, PTGES2 could form a complex with GSH and heme and would not participate in PGE2 synthesis but would catalyze the degradation of prostaglandin E2 H2 (PGH2) to 12(S)-hydroxy-5(Z),8(E),10(E)-heptadecatrienoic acid (HHT) and malondialdehyde (MDA). May also have transactivation activity toward IFN-gamma (IFNG), possibly via an interaction with CEBPB; however, the relevance of transcription activation activity remains unclear. In Mus musculus (Mouse), this protein is Prostaglandin E synthase 2 (Ptges2).